A 323-amino-acid chain; its full sequence is tRNA U34 carboxymethyltransferase (323 aa).

Residues Lys91, Trp105, Lys110, Gly130, 152 to 154 (DPT), 181 to 182 (IE), Met196, Tyr200, and Arg315 contribute to the carboxy-S-adenosyl-L-methionine site.

This sequence belongs to the class I-like SAM-binding methyltransferase superfamily. CmoB family. As to quaternary structure, homotetramer.

The enzyme catalyses carboxy-S-adenosyl-L-methionine + 5-hydroxyuridine(34) in tRNA = 5-carboxymethoxyuridine(34) in tRNA + S-adenosyl-L-homocysteine + H(+). In terms of biological role, catalyzes carboxymethyl transfer from carboxy-S-adenosyl-L-methionine (Cx-SAM) to 5-hydroxyuridine (ho5U) to form 5-carboxymethoxyuridine (cmo5U) at position 34 in tRNAs. This chain is tRNA U34 carboxymethyltransferase, found in Shigella flexneri serotype 5b (strain 8401).